Consider the following 420-residue polypeptide: Glucose-1-phosphate adenylyltransferase (420 aa).

Alpha-D-glucose 1-phosphate-binding positions include Tyr97, Gly162, 177–178 (EK), and Ser188.

It belongs to the bacterial/plant glucose-1-phosphate adenylyltransferase family. Homotetramer.

The catalysed reaction is alpha-D-glucose 1-phosphate + ATP + H(+) = ADP-alpha-D-glucose + diphosphate. It functions in the pathway glycan biosynthesis; glycogen biosynthesis. Functionally, involved in the biosynthesis of ADP-glucose, a building block required for the elongation reactions to produce glycogen. Catalyzes the reaction between ATP and alpha-D-glucose 1-phosphate (G1P) to produce pyrophosphate and ADP-Glc. This Pseudothermotoga lettingae (strain ATCC BAA-301 / DSM 14385 / NBRC 107922 / TMO) (Thermotoga lettingae) protein is Glucose-1-phosphate adenylyltransferase.